Here is a 103-residue protein sequence, read N- to C-terminus: Large ribosomal subunit protein bL21 (103 aa).

Belongs to the bacterial ribosomal protein bL21 family. As to quaternary structure, part of the 50S ribosomal subunit. Contacts protein L20.

This protein binds to 23S rRNA in the presence of protein L20. This is Large ribosomal subunit protein bL21 from Bordetella avium (strain 197N).